The sequence spans 1058 residues: MAKRTDIKKIMVIGSGPIVIGQAAEFDYAGTQACLALKEEGYQVVLVNSNPATIMTDKEVADKVYIEPLTLAFVSRILRKERPDALLPTLGGQTGLNMAMELSKAGILQELGVELLGTTLSAIDQAEDRDLFKQLMKELGEPIPESEIVTTVEAAIGFANAIGYPVIVRPAFTLGGTGGGICSNEEVLRDIVENGLKLSPVTQCLIERSIAGFKEIEYEVMRDAADNALVVCSMENFDPVGIHTGDSIVFAPTQTLSDVENQLLRDASLRIIRALKIEGGCNVQLALDPNSFSYYVIEVNPRVSRSSALASKATGYPIAKIAAKIAVGLRLDDMLNPVTGTTYAMFEPALDYVVAKLPRFPFDKFERGERRLGTQMKATGEVMAIGRRIEECLLKACRSLEIGVHHNELKGLDTISDHELVAHIVRAQDDRLFYLSEALRRGYSIEELAGLTKIDLFFLDKLRHIVELEQDLIKKPVDIDLLIEAKRYGFSDQKIAELWQTDAASIRRLRRAYRVLPVYKMVDTCAAEFDSQTPYFYSTYEWENESIKSEKESVIVLGSGPIRIGQGVEFDYATVHSVKAIQAAGYEAIIMNSNPETVSTDFSISDKLYFEPLTFEEVMNVIELEQPKGVILQFGGQTAINLAEQLTKAGVPILGTQLEDLDCAEDRELFEKALKELGIPQPPGKTATNEAEALEAARAIGFPVLVRPSYVLGGRAMEIVENENDLRSYMKTAVKASPEHPVLIDSYILGKECEVDAISDGQSVLIPGIMEHIERAGVHSGDSMAVYPPQHLSKQVQDKIVDYTKRLAIGLNCIGMMNIQFVIQNEQVYVIEVNPRASRTVPFLSKVTNIPMAQVATKLILGQTLKDLGYQDGLYPESSLVHIKAPVFSFAKLAKVDSLLGPEMKSTGEVMGSDLTLEKALYKAFEASYLHMPEYGTIVFTIADDHKSEALILARRFSAIGYQIMATEGTAAFFADQGLDSQLVGKIGDNAHDIPALLRKGQIQAIINTVGTKRVTDKDGQMIRSSAIEQGVPLFTALDTAVAMLRVLESRTFSIEAI.

Positions 1–401 are carboxyphosphate synthetic domain; that stretch reads MAKRTDIKKI…CLLKACRSLE (401 aa). ATP is bound by residues Arg129, Arg169, Gly175, Gly176, Arg208, Ile210, Glu215, Gly241, Ile242, His243, Gln284, and Glu298. Positions 133-327 constitute an ATP-grasp 1 domain; the sequence is KQLMKELGEP…IAKIAAKIAV (195 aa). The Mg(2+) site is built by Gln284, Glu298, and Asn300. Mn(2+) is bound by residues Gln284, Glu298, and Asn300. Residues 402–546 are oligomerization domain; that stretch reads IGVHHNELKG…YSTYEWENES (145 aa). The interval 547–929 is carbamoyl phosphate synthetic domain; sequence IKSEKESVIV…ALYKAFEASY (383 aa). One can recognise an ATP-grasp 2 domain in the interval 671 to 861; sequence EKALKELGIP…MAQVATKLIL (191 aa). Residues Arg707, Ser746, Ile748, Glu752, Gly777, Val778, His779, Ser780, Gln820, and Glu832 each coordinate ATP. Mg(2+)-binding residues include Gln820, Glu832, and Asn834. Mn(2+)-binding residues include Gln820, Glu832, and Asn834. In terms of domain architecture, MGS-like spans 930-1058; that stretch reads LHMPEYGTIV…ESRTFSIEAI (129 aa). Residues 930–1058 form an allosteric domain region; the sequence is LHMPEYGTIV…ESRTFSIEAI (129 aa).

It belongs to the CarB family. In terms of assembly, composed of two chains; the small (or glutamine) chain promotes the hydrolysis of glutamine to ammonia, which is used by the large (or ammonia) chain to synthesize carbamoyl phosphate. Tetramer of heterodimers (alpha,beta)4. The cofactor is Mg(2+). Mn(2+) serves as cofactor.

It carries out the reaction hydrogencarbonate + L-glutamine + 2 ATP + H2O = carbamoyl phosphate + L-glutamate + 2 ADP + phosphate + 2 H(+). It catalyses the reaction hydrogencarbonate + NH4(+) + 2 ATP = carbamoyl phosphate + 2 ADP + phosphate + 2 H(+). Its pathway is amino-acid biosynthesis; L-arginine biosynthesis; carbamoyl phosphate from bicarbonate: step 1/1. The protein operates within pyrimidine metabolism; UMP biosynthesis via de novo pathway; (S)-dihydroorotate from bicarbonate: step 1/3. In terms of biological role, large subunit of the glutamine-dependent carbamoyl phosphate synthetase (CPSase). CPSase catalyzes the formation of carbamoyl phosphate from the ammonia moiety of glutamine, carbonate, and phosphate donated by ATP, constituting the first step of 2 biosynthetic pathways, one leading to arginine and/or urea and the other to pyrimidine nucleotides. The large subunit (synthetase) binds the substrates ammonia (free or transferred from glutamine from the small subunit), hydrogencarbonate and ATP and carries out an ATP-coupled ligase reaction, activating hydrogencarbonate by forming carboxy phosphate which reacts with ammonia to form carbamoyl phosphate. The chain is Carbamoyl phosphate synthase large chain from Streptococcus equi subsp. equi (strain 4047).